The following is a 619-amino-acid chain: Alpha-(1,6)-fucosyltransferase (619 aa).

Topologically, residues 1–17 are cytoplasmic; sequence MLLVRQLFGASANSWAR. A helical; Signal-anchor for type II membrane protein membrane pass occupies residues 18-38; it reads ALIIFVLAWIGLVYVFVVKLT. Topologically, residues 39–619 are lumenal; sequence NTQGQQAAGE…TAKLPLYAGI (581 aa). 3 disulfides stabilise this stretch: Cys-253–Cys-315, Cys-261–Cys-279, and Cys-267–Cys-271. Residues 255–539 form the GT23 domain; sequence NARKLVCKLN…PDAAHRFKSL (285 aa). The SH3-binding motif lies at 345-351; sequence PRPPYLP. Residues 411–412 form an important for donor substrate binding region; that stretch reads RR. Cys-511 and Cys-518 form a disulfide bridge. The SH3 domain occupies 548 to 609; sequence QNAHNRRVVI…PSFKVEEKVD (62 aa).

This sequence belongs to the glycosyltransferase 23 family. Mn(2+) is required as a cofactor. Mg(2+) serves as cofactor.

Its subcellular location is the golgi apparatus. The protein resides in the golgi stack membrane. It carries out the reaction N(4)-{beta-D-GlcNAc-(1-&gt;2)-alpha-D-Man-(1-&gt;3)-[beta-D-GlcNAc-(1-&gt;2)-alpha-D-Man-(1-&gt;6)]-beta-D-Man-(1-&gt;4)-beta-D-GlcNAc-(1-&gt;4)-beta-D-GlcNAc}-L-asparaginyl-[protein] + GDP-beta-L-fucose = an N(4)-{beta-D-GlcNAc-(1-&gt;2)-alpha-D-Man-(1-&gt;3)-[beta-D-GlcNAc-(1-&gt;2)-alpha-D-Man-(1-&gt;6)]-beta-D-Man-(1-&gt;4)-beta-D-GlcNAc-(1-&gt;4)-[alpha-L-Fuc-(1-&gt;6)]-beta-D-GlcNAc}-L-asparaginyl-[protein] + GDP + H(+). It participates in protein modification; protein glycosylation. Functionally, catalyzes the addition of fucose in alpha 1-6 linkage to the first GlcNAc residue, next to the peptide chains in N-glycans. The addition is prevented if the GlcNAc residue is already fucosylated. This chain is Alpha-(1,6)-fucosyltransferase (FucT6), found in Drosophila melanogaster (Fruit fly).